The following is a 741-amino-acid chain: Ion-translocating oxidoreductase complex subunit C (741 aa).

2 4Fe-4S ferredoxin-type domains span residues 369-397 (GEPQ…QQLY) and 407-436 (KATT…VQYF). [4Fe-4S] cluster-binding residues include cysteine 377, cysteine 380, cysteine 383, cysteine 387, cysteine 416, cysteine 419, cysteine 422, and cysteine 426. Positions 627–654 (IARAKARKLEQQQQANAEPEEQVDPRKA) are disordered.

It belongs to the 4Fe4S bacterial-type ferredoxin family. RnfC subfamily. As to quaternary structure, the complex is composed of six subunits: RsxA, RsxB, RsxC, RsxD, RsxE and RsxG. Requires [4Fe-4S] cluster as cofactor.

It is found in the cell inner membrane. Functionally, part of a membrane-bound complex that couples electron transfer with translocation of ions across the membrane. Required to maintain the reduced state of SoxR. The chain is Ion-translocating oxidoreductase complex subunit C from Escherichia coli O127:H6 (strain E2348/69 / EPEC).